The sequence spans 288 residues: ATP synthase gamma chain (288 aa).

This sequence belongs to the ATPase gamma chain family. As to quaternary structure, F-type ATPases have 2 components, CF(1) - the catalytic core - and CF(0) - the membrane proton channel. CF(1) has five subunits: alpha(3), beta(3), gamma(1), delta(1), epsilon(1). CF(0) has three main subunits: a, b and c.

The protein resides in the cell inner membrane. In terms of biological role, produces ATP from ADP in the presence of a proton gradient across the membrane. The gamma chain is believed to be important in regulating ATPase activity and the flow of protons through the CF(0) complex. The sequence is that of ATP synthase gamma chain from Aeromonas hydrophila subsp. hydrophila (strain ATCC 7966 / DSM 30187 / BCRC 13018 / CCUG 14551 / JCM 1027 / KCTC 2358 / NCIMB 9240 / NCTC 8049).